The following is a 262-amino-acid chain: Hemin import ATP-binding protein HmuV (262 aa).

An ABC transporter domain is found at 5 to 242; that stretch reads LEARKAGFAT…ELIGAVFDVE (238 aa). An ATP-binding site is contributed by 37-44; sequence GPNGAGKS.

It belongs to the ABC transporter superfamily. Heme (hemin) importer (TC 3.A.1.14.5) family. In terms of assembly, the complex is composed of two ATP-binding proteins (HmuV), two transmembrane proteins (HmuU) and a solute-binding protein (HmuT).

The protein resides in the cell inner membrane. Part of the ABC transporter complex HmuTUV involved in hemin import. Responsible for energy coupling to the transport system. This is Hemin import ATP-binding protein HmuV from Rhodopseudomonas palustris (strain HaA2).